Consider the following 556-residue polypeptide: 2,3-bisphosphoglycerate-independent phosphoglycerate mutase (556 aa).

Residues D25 and S78 each coordinate Mn(2+). The active-site Phosphoserine intermediate is the S78. Residues H137, 167–168 (RD), R203, R210, 283–286 (RADR), and K358 contribute to the substrate site. Residues D427, H431, D468, H469, and H498 each coordinate Mn(2+).

The protein belongs to the BPG-independent phosphoglycerate mutase family. In terms of assembly, monomer. Mn(2+) is required as a cofactor. In terms of tissue distribution, found ubiquitously in germinating seed.

Its subcellular location is the cytoplasm. It carries out the reaction (2R)-2-phosphoglycerate = (2R)-3-phosphoglycerate. Its pathway is carbohydrate degradation; glycolysis; pyruvate from D-glyceraldehyde 3-phosphate: step 3/5. Its function is as follows. Catalyzes the interconversion of 2-phosphoglycerate and 3-phosphoglycerate. The polypeptide is 2,3-bisphosphoglycerate-independent phosphoglycerate mutase (Ricinus communis (Castor bean)).